We begin with the raw amino-acid sequence, 459 residues long: Bifunctional protein GlmU (459 aa).

A pyrophosphorylase region spans residues 1-229; the sequence is MSNFAIILAA…FDESLGVNDR (229 aa). Residues 8–11, K22, Q72, and 77–78 contribute to the UDP-N-acetyl-alpha-D-glucosamine site; these read LAAG and GT. Residue D102 coordinates Mg(2+). UDP-N-acetyl-alpha-D-glucosamine contacts are provided by G139, E154, N169, and N227. A Mg(2+)-binding site is contributed by N227. Residues 230 to 250 are linker; sequence VALATAESVMRRRINHKHMVN. Positions 251–459 are N-acetyltransferase; sequence GVSFVNPEAT…TRLPHHPKNQ (209 aa). UDP-N-acetyl-alpha-D-glucosamine contacts are provided by R332 and K350. H362 functions as the Proton acceptor in the catalytic mechanism. UDP-N-acetyl-alpha-D-glucosamine is bound by residues Y365 and N376. Residues A379, 385–386, S404, A422, and R439 each bind acetyl-CoA; that span reads NY.

This sequence in the N-terminal section; belongs to the N-acetylglucosamine-1-phosphate uridyltransferase family. It in the C-terminal section; belongs to the transferase hexapeptide repeat family. As to quaternary structure, homotrimer. Mg(2+) serves as cofactor.

It is found in the cytoplasm. It carries out the reaction alpha-D-glucosamine 1-phosphate + acetyl-CoA = N-acetyl-alpha-D-glucosamine 1-phosphate + CoA + H(+). The catalysed reaction is N-acetyl-alpha-D-glucosamine 1-phosphate + UTP + H(+) = UDP-N-acetyl-alpha-D-glucosamine + diphosphate. The protein operates within nucleotide-sugar biosynthesis; UDP-N-acetyl-alpha-D-glucosamine biosynthesis; N-acetyl-alpha-D-glucosamine 1-phosphate from alpha-D-glucosamine 6-phosphate (route II): step 2/2. It participates in nucleotide-sugar biosynthesis; UDP-N-acetyl-alpha-D-glucosamine biosynthesis; UDP-N-acetyl-alpha-D-glucosamine from N-acetyl-alpha-D-glucosamine 1-phosphate: step 1/1. It functions in the pathway bacterial outer membrane biogenesis; LPS lipid A biosynthesis. Functionally, catalyzes the last two sequential reactions in the de novo biosynthetic pathway for UDP-N-acetylglucosamine (UDP-GlcNAc). The C-terminal domain catalyzes the transfer of acetyl group from acetyl coenzyme A to glucosamine-1-phosphate (GlcN-1-P) to produce N-acetylglucosamine-1-phosphate (GlcNAc-1-P), which is converted into UDP-GlcNAc by the transfer of uridine 5-monophosphate (from uridine 5-triphosphate), a reaction catalyzed by the N-terminal domain. In Streptococcus pneumoniae (strain Taiwan19F-14), this protein is Bifunctional protein GlmU.